The primary structure comprises 165 residues: Nucleotide-binding protein PMN2A_1813 (165 aa).

The protein belongs to the YajQ family.

Nucleotide-binding protein. This chain is Nucleotide-binding protein PMN2A_1813, found in Prochlorococcus marinus (strain NATL2A).